The following is a 602-amino-acid chain: Elongation factor 4 (602 aa).

A tr-type G domain is found at 5-187; the sequence is DHIRNFAIIA…QIIVSLPAPE (183 aa). GTP contacts are provided by residues 17–22 and 134–137; these read DHGKST and NKVD.

This sequence belongs to the TRAFAC class translation factor GTPase superfamily. Classic translation factor GTPase family. LepA subfamily.

Its subcellular location is the cell inner membrane. It catalyses the reaction GTP + H2O = GDP + phosphate + H(+). In terms of biological role, required for accurate and efficient protein synthesis under certain stress conditions. May act as a fidelity factor of the translation reaction, by catalyzing a one-codon backward translocation of tRNAs on improperly translocated ribosomes. Back-translocation proceeds from a post-translocation (POST) complex to a pre-translocation (PRE) complex, thus giving elongation factor G a second chance to translocate the tRNAs correctly. Binds to ribosomes in a GTP-dependent manner. The chain is Elongation factor 4 from Pelagibacter ubique (strain HTCC1062).